Reading from the N-terminus, the 366-residue chain is Aminomethyltransferase (366 aa).

The protein belongs to the GcvT family. As to quaternary structure, the glycine cleavage system is composed of four proteins: P, T, L and H.

It carries out the reaction N(6)-[(R)-S(8)-aminomethyldihydrolipoyl]-L-lysyl-[protein] + (6S)-5,6,7,8-tetrahydrofolate = N(6)-[(R)-dihydrolipoyl]-L-lysyl-[protein] + (6R)-5,10-methylene-5,6,7,8-tetrahydrofolate + NH4(+). The glycine cleavage system catalyzes the degradation of glycine. In Bacillus cereus (strain 03BB102), this protein is Aminomethyltransferase.